Reading from the N-terminus, the 236-residue chain is Ribosomal RNA large subunit methyltransferase E (236 aa).

Residues glycine 76, tryptophan 78, aspartate 99, aspartate 115, and aspartate 140 each contribute to the S-adenosyl-L-methionine site. The active-site Proton acceptor is the lysine 180.

This sequence belongs to the class I-like SAM-binding methyltransferase superfamily. RNA methyltransferase RlmE family.

The protein localises to the cytoplasm. The catalysed reaction is uridine(2552) in 23S rRNA + S-adenosyl-L-methionine = 2'-O-methyluridine(2552) in 23S rRNA + S-adenosyl-L-homocysteine + H(+). In terms of biological role, specifically methylates the uridine in position 2552 of 23S rRNA at the 2'-O position of the ribose in the fully assembled 50S ribosomal subunit. The protein is Ribosomal RNA large subunit methyltransferase E of Rhodopseudomonas palustris (strain HaA2).